A 94-amino-acid chain; its full sequence is Small ribosomal subunit protein uS19 (94 aa).

The protein belongs to the universal ribosomal protein uS19 family.

In terms of biological role, protein S19 forms a complex with S13 that binds strongly to the 16S ribosomal RNA. The sequence is that of Small ribosomal subunit protein uS19 from Dictyoglomus turgidum (strain DSM 6724 / Z-1310).